We begin with the raw amino-acid sequence, 82 residues long: ATP synthase subunit c, chloroplastic (82 aa).

Helical transmembrane passes span 7–27 and 57–77; these read AASVIAAGLAVGLAAIGPGIG and LAFMESLTIYGLVVALSLLFA.

It belongs to the ATPase C chain family. In terms of assembly, F-type ATPases have 2 components, F(1) - the catalytic core - and F(0) - the membrane proton channel. F(1) has five subunits: alpha(3), beta(3), gamma(1), delta(1), epsilon(1). F(0) has four main subunits: a(1), b(1), b'(1) and c(10-14). The alpha and beta chains form an alternating ring which encloses part of the gamma chain. F(1) is attached to F(0) by a central stalk formed by the gamma and epsilon chains, while a peripheral stalk is formed by the delta, b and b' chains.

The protein resides in the plastid. The protein localises to the chloroplast thylakoid membrane. F(1)F(0) ATP synthase produces ATP from ADP in the presence of a proton or sodium gradient. F-type ATPases consist of two structural domains, F(1) containing the extramembraneous catalytic core and F(0) containing the membrane proton channel, linked together by a central stalk and a peripheral stalk. During catalysis, ATP synthesis in the catalytic domain of F(1) is coupled via a rotary mechanism of the central stalk subunits to proton translocation. Its function is as follows. Key component of the F(0) channel; it plays a direct role in translocation across the membrane. A homomeric c-ring of between 10-14 subunits forms the central stalk rotor element with the F(1) delta and epsilon subunits. The chain is ATP synthase subunit c, chloroplastic from Porphyra purpurea (Red seaweed).